The chain runs to 381 residues: Cytochrome b (381 aa).

4 helical membrane-spanning segments follow: residues 34-54 (FGSL…FLAM), 78-99 (WLIR…YLHI), 114-134 (WNIG…GYVL), and 179-199 (FFAF…IHLL). Residues H84 and H98 each coordinate heme b. Residues H183 and H197 each contribute to the heme b site. Residue H202 participates in a ubiquinone binding. A run of 4 helical transmembrane segments spans residues 227 to 247 (YKDL…ALFM), 289 to 309 (LGGV…PLLH), 321 to 341 (LTQI…WIGG), and 348 to 368 (FITV…IIMP).

This sequence belongs to the cytochrome b family. As to quaternary structure, the cytochrome bc1 complex contains 3 respiratory subunits (MT-CYB, CYC1 and UQCRFS1), 2 core proteins (UQCRC1 and UQCRC2) and probably 6 low-molecular weight proteins. Heme b is required as a cofactor.

The protein resides in the mitochondrion inner membrane. Its function is as follows. Component of the ubiquinol-cytochrome c reductase complex (complex III or cytochrome b-c1 complex) that is part of the mitochondrial respiratory chain. The b-c1 complex mediates electron transfer from ubiquinol to cytochrome c. Contributes to the generation of a proton gradient across the mitochondrial membrane that is then used for ATP synthesis. This Sphyrna tiburo vespertina (Pacific bonnethead shark) protein is Cytochrome b (mt-cyb).